The chain runs to 148 residues: Large ribosomal subunit protein bL9 (148 aa).

Belongs to the bacterial ribosomal protein bL9 family.

Its function is as follows. Binds to the 23S rRNA. The chain is Large ribosomal subunit protein bL9 from Desulfatibacillum aliphaticivorans.